A 1507-amino-acid chain; its full sequence is ABC multidrug transporter SNQ2 (1507 aa).

A disordered region spans residues 1 to 73; it reads MSSSSEISVA…RSSTAELSPE (73 aa). Residues 41 to 55 are compositionally biased toward basic and acidic residues; it reads RSHEDADGDDAHSDN. N-linked (GlcNAc...) asparagine glycosylation is found at N55 and N336. The ABC transporter 1 domain occupies 157-412; it reads CLPYTIYKAI…FYRMGYECPP (256 aa). The next 3 helical transmembrane spans lie at 522–542, 556–576, and 605–625; these read AYTVITICSAIIQSLVSGSLY, GGVLYFCLLYYSLMGLANLSF, and FPFRMIGMTCFLIIIYFLSGL. An N-linked (GlcNAc...) asparagine glycan is attached at N626. Residues 635–655 traverse the membrane as a helical segment; sequence VYLFLTMCSESINALFELIAA. N-linked (GlcNAc...) asparagine glycosylation occurs at N659. 2 helical membrane-spanning segments follow: residues 665–685 and 773–793; these read SISGIVMMSISLYSTYMIQLP and FGIMWCFLLGYIALKALITEI. The ABC transporter 2 domain occupies 857–1099; sequence FIWRNVCYTI…LLSYFERNGA (243 aa). N878 carries N-linked (GlcNAc...) asparagine glycosylation. 893 to 900 contacts ATP; it reads GESGAGKT. 3 helical membrane-spanning segments follow: residues 1193–1213, 1220–1240, and 1270–1290; these read YIMSKMMLMTVGGLYIGFTFY, TGLQNTLFAAFISIILSAPAM, and LITQYLSEIPYHFLFSAIFFV. The N-linked (GlcNAc...) asparagine glycan is linked to N1311. Helical transmembrane passes span 1314–1334 and 1339–1359; these read IMFQLYYIGFGLCVLYMAPNL and VILGLCLSFLIAFCGVVQPVS. N1428 carries an N-linked (GlcNAc...) asparagine glycan. Residues 1459-1479 form a helical membrane-spanning segment; that stretch reads FGLYWAYIGFNICAMVAIYYI.

The protein belongs to the ABC transporter superfamily. ABCG family. PDR (TC 3.A.1.205) subfamily.

It localises to the cell membrane. Functionally, ABC multidrug transporter involved in the response to azoles such as fluconazole, itraconazole, ketoconazole and voriconazole and contributes to the development of PDR1-dependent azole resistance. Plays a role in biofilm tolerance to fluconazole. Also confers resistance to 4-nitroquinoline-N-oxide (4-NQO). This is ABC multidrug transporter SNQ2 from Candida glabrata (strain ATCC 2001 / BCRC 20586 / JCM 3761 / NBRC 0622 / NRRL Y-65 / CBS 138) (Yeast).